The chain runs to 72 residues: Translation initiation factor IF-1 (72 aa).

An S1-like domain is found at 1 to 72 (MAKEDNFELE…SKGRITYRAR (72 aa)).

It belongs to the IF-1 family. As to quaternary structure, component of the 30S ribosomal translation pre-initiation complex which assembles on the 30S ribosome in the order IF-2 and IF-3, IF-1 and N-formylmethionyl-tRNA(fMet); mRNA recruitment can occur at any time during PIC assembly.

It is found in the cytoplasm. One of the essential components for the initiation of protein synthesis. Stabilizes the binding of IF-2 and IF-3 on the 30S subunit to which N-formylmethionyl-tRNA(fMet) subsequently binds. Helps modulate mRNA selection, yielding the 30S pre-initiation complex (PIC). Upon addition of the 50S ribosomal subunit IF-1, IF-2 and IF-3 are released leaving the mature 70S translation initiation complex. This Saccharophagus degradans (strain 2-40 / ATCC 43961 / DSM 17024) protein is Translation initiation factor IF-1.